We begin with the raw amino-acid sequence, 137 residues long: Large ribosomal subunit protein uL16 (137 aa).

Positions M1 to M17 are enriched in basic residues. The disordered stretch occupies residues M1 to G24.

It belongs to the universal ribosomal protein uL16 family. In terms of assembly, part of the 50S ribosomal subunit.

Binds 23S rRNA and is also seen to make contacts with the A and possibly P site tRNAs. This chain is Large ribosomal subunit protein uL16, found in Trichodesmium erythraeum (strain IMS101).